The chain runs to 97 residues: Aspartyl/glutamyl-tRNA(Asn/Gln) amidotransferase subunit C (97 aa).

The protein belongs to the GatC family. Heterotrimer of A, B and C subunits.

The enzyme catalyses L-glutamyl-tRNA(Gln) + L-glutamine + ATP + H2O = L-glutaminyl-tRNA(Gln) + L-glutamate + ADP + phosphate + H(+). It catalyses the reaction L-aspartyl-tRNA(Asn) + L-glutamine + ATP + H2O = L-asparaginyl-tRNA(Asn) + L-glutamate + ADP + phosphate + 2 H(+). Allows the formation of correctly charged Asn-tRNA(Asn) or Gln-tRNA(Gln) through the transamidation of misacylated Asp-tRNA(Asn) or Glu-tRNA(Gln) in organisms which lack either or both of asparaginyl-tRNA or glutaminyl-tRNA synthetases. The reaction takes place in the presence of glutamine and ATP through an activated phospho-Asp-tRNA(Asn) or phospho-Glu-tRNA(Gln). This is Aspartyl/glutamyl-tRNA(Asn/Gln) amidotransferase subunit C from Clostridium botulinum (strain Eklund 17B / Type B).